The primary structure comprises 428 residues: Phosphomethylpyrimidine synthase 2 (428 aa).

Residues Met-94, Tyr-123, His-162, 184-186 (SRG), 225-228 (NGMR), and Glu-264 contribute to the substrate site. His-268 is a binding site for Zn(2+). Residue Tyr-291 participates in substrate binding. His-332 is a Zn(2+) binding site. [4Fe-4S] cluster-binding residues include Cys-408, Cys-411, and Cys-415.

Belongs to the ThiC family. The cofactor is [4Fe-4S] cluster.

It carries out the reaction 5-amino-1-(5-phospho-beta-D-ribosyl)imidazole + S-adenosyl-L-methionine = 4-amino-2-methyl-5-(phosphooxymethyl)pyrimidine + CO + 5'-deoxyadenosine + formate + L-methionine + 3 H(+). It participates in cofactor biosynthesis; thiamine diphosphate biosynthesis. Functionally, catalyzes the synthesis of the hydroxymethylpyrimidine phosphate (HMP-P) moiety of thiamine from aminoimidazole ribotide (AIR) in a radical S-adenosyl-L-methionine (SAM)-dependent reaction. In Methanosarcina acetivorans (strain ATCC 35395 / DSM 2834 / JCM 12185 / C2A), this protein is Phosphomethylpyrimidine synthase 2.